Here is a 339-residue protein sequence, read N- to C-terminus: Glyceraldehyde-3-phosphate dehydrogenase (339 aa).

Residues 11-12 (TI) and G110 each bind NAD(+). Position 139–141 (139–141 (SCN)) interacts with D-glyceraldehyde 3-phosphate. Catalysis depends on C140, which acts as the Nucleophile. Residue R168 coordinates NAD(+). 194 to 195 (HG) contacts D-glyceraldehyde 3-phosphate. Q301 provides a ligand contact to NAD(+).

It belongs to the glyceraldehyde-3-phosphate dehydrogenase family. In terms of assembly, homotetramer.

The protein localises to the cytoplasm. It catalyses the reaction D-glyceraldehyde 3-phosphate + phosphate + NADP(+) = (2R)-3-phospho-glyceroyl phosphate + NADPH + H(+). The catalysed reaction is D-glyceraldehyde 3-phosphate + phosphate + NAD(+) = (2R)-3-phospho-glyceroyl phosphate + NADH + H(+). It functions in the pathway carbohydrate degradation; glycolysis; pyruvate from D-glyceraldehyde 3-phosphate: step 1/5. This chain is Glyceraldehyde-3-phosphate dehydrogenase, found in Methanospirillum hungatei JF-1 (strain ATCC 27890 / DSM 864 / NBRC 100397 / JF-1).